Consider the following 160-residue polypeptide: UPF0260 protein GDI1595/Gdia_1801 (160 aa).

This sequence belongs to the UPF0260 family.

This is UPF0260 protein GDI1595/Gdia_1801 from Gluconacetobacter diazotrophicus (strain ATCC 49037 / DSM 5601 / CCUG 37298 / CIP 103539 / LMG 7603 / PAl5).